The primary structure comprises 22 residues: Fuctinin-2 (22 aa).

Positions 1-22 (ELPGLPKGEKEQQEAIEHIDEV) are disordered. The span at 7–22 (KGEKEQQEAIEHIDEV) shows a compositional bias: basic and acidic residues.

It to human SET/PHAPII protein. As to quaternary structure, oligomer.

Its subcellular location is the cytoplasm. Functionally, has a role in the physiological regulation of fucosylation processes. The chain is Fuctinin-2 from Rattus norvegicus (Rat).